The primary structure comprises 238 residues: CD63 antigen (238 aa).

Over 1-11 (MAVEGGMKCVK) the chain is Cytoplasmic. A helical transmembrane segment spans residues 12–32 (FLLYVLLLAFCACAVGLIAIG). Residues 33-51 (VAVQVVLKQAITHETTAGS) lie on the Extracellular side of the membrane. The helical transmembrane segment at 52 to 72 (LLPVVIIAVGAFLFLVAFVGC) threads the bilayer. The Cytoplasmic portion of the chain corresponds to 73–81 (CGACKENYC). A helical transmembrane segment spans residues 82-102 (LMITFAIFLSLIMLVEVAVAI). The Extracellular portion of the chain corresponds to 103–203 (AGYVFRDQVK…TIAIWLRKNI (101 aa)). N-linked (GlcNAc...) asparagine glycans are attached at residues asparagine 116, asparagine 130, asparagine 150, and asparagine 172. The helical transmembrane segment at 204-224 (LLVAAAALGIAFVEVLGIIFS) threads the bilayer. Residues 225 to 238 (CCLVKSIRSGYEVM) lie on the Cytoplasmic side of the membrane. Residues 234–238 (GYEVM) carry the Lysosomal targeting motif motif.

The protein belongs to the tetraspanin (TM4SF) family. Interacts with TIMP1 and ITGB1 and recruits TIMP1 to ITGB1. Interacts with CD9. Identified in a complex with CD9 and ITGB3. Interacts with PMEL. Interacts with KDR/VEGFR2; identified in a complex with ITGB1 and KDR/VEGFR2 and is required to recruit KDR to ITGB1 complexes. Interacts with SYT7. In terms of processing, palmitoylated at a low, basal level in unstimulated platelets. The level of palmitoylation increases when platelets are activated by thrombin (in vitro). As to expression, ubiquitous. Strongly expressed in kidney. Detected in spleen, bone marrow, peripheral blood mononuclear cells and macrophages.

It localises to the cell membrane. It is found in the lysosome membrane. Its subcellular location is the late endosome membrane. The protein resides in the endosome. The protein localises to the multivesicular body. It localises to the melanosome. It is found in the secreted. Its subcellular location is the extracellular exosome. The protein resides in the cell surface. Its function is as follows. Functions as a cell surface receptor for TIMP1 and plays a role in the activation of cellular signaling cascades. Plays a role in the activation of ITGB1 and integrin signaling, leading to the activation of AKT, FAK/PTK2 and MAP kinases. Promotes cell survival, reorganization of the actin cytoskeleton, cell adhesion, spreading and migration, via its role in the activation of AKT and FAK/PTK2. Plays a role in VEGFA signaling via its role in regulating the internalization of KDR/VEGFR2. Plays a role in intracellular vesicular transport processes, and is required for normal trafficking of the PMEL luminal domain that is essential for the development and maturation of melanocytes. Plays a role in the adhesion of leukocytes onto endothelial cells via its role in the regulation of SELP trafficking. May play a role in mast cell degranulation in response to Ms4a2/FceRI stimulation, but not in mast cell degranulation in response to other stimuli. The polypeptide is CD63 antigen (Cd63) (Mus musculus (Mouse)).